The following is a 271-amino-acid chain: Ribosomal RNA small subunit methyltransferase A (271 aa).

S-adenosyl-L-methionine is bound by residues histidine 11, leucine 13, glycine 38, glutamate 58, aspartate 86, and asparagine 101.

It belongs to the class I-like SAM-binding methyltransferase superfamily. rRNA adenine N(6)-methyltransferase family. RsmA subfamily.

The protein resides in the cytoplasm. It catalyses the reaction adenosine(1518)/adenosine(1519) in 16S rRNA + 4 S-adenosyl-L-methionine = N(6)-dimethyladenosine(1518)/N(6)-dimethyladenosine(1519) in 16S rRNA + 4 S-adenosyl-L-homocysteine + 4 H(+). Specifically dimethylates two adjacent adenosines (A1518 and A1519) in the loop of a conserved hairpin near the 3'-end of 16S rRNA in the 30S particle. May play a critical role in biogenesis of 30S subunits. This is Ribosomal RNA small subunit methyltransferase A from Helicobacter pylori (strain P12).